The sequence spans 146 residues: Acidic phospholipase A2 S5-32M (146 aa).

The first 19 residues, 1–19 (MYPAHLLVLLAVCVSLLGA), serve as a signal peptide directing secretion. The propeptide occupies 20–27 (ASIPPQPL). 7 disulfides stabilise this stretch: Cys38-Cys98, Cys54-Cys145, Cys56-Cys72, Cys71-Cys126, Cys78-Cys119, Cys87-Cys112, and Cys105-Cys117. Positions 55, 57, and 59 each coordinate Ca(2+). His75 is a catalytic residue. Asp76 contributes to the Ca(2+) binding site. Asp120 is a catalytic residue.

Belongs to the phospholipase A2 family. Group I subfamily. D49 sub-subfamily. The cofactor is Ca(2+). Expressed by the venom gland.

It is found in the secreted. It catalyses the reaction a 1,2-diacyl-sn-glycero-3-phosphocholine + H2O = a 1-acyl-sn-glycero-3-phosphocholine + a fatty acid + H(+). Functionally, snake venom phospholipase A2 (PLA2) that inhibits collagen-induced platelet aggregation. PLA2 catalyzes the calcium-dependent hydrolysis of the 2-acyl groups in 3-sn-phosphoglycerides. In Austrelaps superbus (Lowland copperhead snake), this protein is Acidic phospholipase A2 S5-32M.